A 180-amino-acid polypeptide reads, in one-letter code: Small ribosomal subunit protein uS4 (180 aa).

Residues 103–174 form the S4 RNA-binding domain; it reads RRLQTIVYKK…HPERMMIEKA (72 aa).

It belongs to the universal ribosomal protein uS4 family. As to quaternary structure, part of the 30S ribosomal subunit. Contacts protein S5. The interaction surface between S4 and S5 is involved in control of translational fidelity.

In terms of biological role, one of the primary rRNA binding proteins, it binds directly to 16S rRNA where it nucleates assembly of the body of the 30S subunit. Its function is as follows. With S5 and S12 plays an important role in translational accuracy. The polypeptide is Small ribosomal subunit protein uS4 (Pyrococcus horikoshii (strain ATCC 700860 / DSM 12428 / JCM 9974 / NBRC 100139 / OT-3)).